Reading from the N-terminus, the 453-residue chain is tRNA hydroxylation protein P (453 aa).

It belongs to the peptidase U32 family.

Involved in prephenate-dependent formation of 5-hydroxyuridine (ho5U) modification at position 34 in tRNAs, the first step in 5-carboxymethoxyuridine (cmo5U) biosynthesis. Involved differently in ho5U formation in each tRNA; tRNA(Leu3) and tRNA(Pro3) are major targets of TrhP. The sequence is that of tRNA hydroxylation protein P from Escherichia coli (strain K12).